We begin with the raw amino-acid sequence, 321 residues long: Pirin-like protein 2 (321 aa).

Fe cation is bound by residues His-88, His-90, His-132, and Glu-134.

Belongs to the pirin family. In terms of assembly, interacts with RD21A, RD21B and XCP2.

Its subcellular location is the cytoplasm. The protein resides in the cytosol. It localises to the nucleus. In terms of biological role, involved in susceptibility to the bacterial plant pathogen Ralstonia solanacearum. Stabilizes the xylem cysteine protease XCP2 by blocking its autolysis. This chain is Pirin-like protein 2, found in Arabidopsis thaliana (Mouse-ear cress).